Consider the following 195-residue polypeptide: ATP-dependent Clp protease proteolytic subunit (195 aa).

Ser-98 acts as the Nucleophile in catalysis. The active site involves His-123.

It belongs to the peptidase S14 family. In terms of assembly, fourteen ClpP subunits assemble into 2 heptameric rings which stack back to back to give a disk-like structure with a central cavity, resembling the structure of eukaryotic proteasomes.

The protein resides in the cytoplasm. It catalyses the reaction Hydrolysis of proteins to small peptides in the presence of ATP and magnesium. alpha-casein is the usual test substrate. In the absence of ATP, only oligopeptides shorter than five residues are hydrolyzed (such as succinyl-Leu-Tyr-|-NHMec, and Leu-Tyr-Leu-|-Tyr-Trp, in which cleavage of the -Tyr-|-Leu- and -Tyr-|-Trp bonds also occurs).. Functionally, cleaves peptides in various proteins in a process that requires ATP hydrolysis. Has a chymotrypsin-like activity. Plays a major role in the degradation of misfolded proteins. The chain is ATP-dependent Clp protease proteolytic subunit from Helicobacter pylori (strain J99 / ATCC 700824) (Campylobacter pylori J99).